A 437-amino-acid polypeptide reads, in one-letter code: GTPase Obg (437 aa).

One can recognise an Obg domain in the interval 2–160; the sequence is SMFLDTAKIS…RQLELELKIL (159 aa). Residues 161 to 338 enclose the OBG-type G domain; it reads ADVGLVGFPS…LLEATAELLA (178 aa). Residues 167–174, 192–196, 214–217, 284–287, and 319–321 contribute to the GTP site; these read GFPSVGKS, FTTIV, DLPG, NKMD, and SSL. Positions 174 and 194 each coordinate Mg(2+). The 79-residue stretch at 359-437 folds into the OCT domain; sequence GFAEAEKDFE…IGKFEFEFVD (79 aa).

Belongs to the TRAFAC class OBG-HflX-like GTPase superfamily. OBG GTPase family. In terms of assembly, monomer. Mg(2+) is required as a cofactor.

The protein localises to the cytoplasm. Functionally, an essential GTPase which binds GTP, GDP and possibly (p)ppGpp with moderate affinity, with high nucleotide exchange rates and a fairly low GTP hydrolysis rate. Plays a role in control of the cell cycle, stress response, ribosome biogenesis and in those bacteria that undergo differentiation, in morphogenesis control. The polypeptide is GTPase Obg (Streptococcus pyogenes serotype M18 (strain MGAS8232)).